A 618-amino-acid polypeptide reads, in one-letter code: Medium-chain acyl-CoA ligase ACSF2, mitochondrial (618 aa).

Residues 1–44 (MRATAAYVGMLRLGRMCAGSPGVLGARAALSRSWQEARLQAVRF) constitute a mitochondrion transit peptide. Position 182 is an N6-acetyllysine (Lys182). An N6-acetyllysine; alternate modification is found at Lys185. Position 185 is an N6-succinyllysine; alternate (Lys185). 266–274 (TSGTTGSPK) is a binding site for ATP. Lys343 and Lys401 each carry N6-acetyllysine. At Lys481 the chain carries N6-succinyllysine. The ATP site is built by Asp496 and Arg511. Lys513 is subject to N6-acetyllysine. N6-acetyllysine; alternate occurs at positions 547 and 573. Residues Lys547 and Lys573 each carry the N6-succinyllysine; alternate modification. Residue Lys602 coordinates ATP. An N6-succinyllysine modification is found at Lys602.

It belongs to the ATP-dependent AMP-binding enzyme family.

The protein localises to the mitochondrion. The catalysed reaction is a medium-chain fatty acid + ATP + CoA = a medium-chain fatty acyl-CoA + AMP + diphosphate. The enzyme catalyses octanoate + ATP + CoA = octanoyl-CoA + AMP + diphosphate. In terms of biological role, acyl-CoA synthases catalyze the initial reaction in fatty acid metabolism, by forming a thioester with CoA. Has some preference toward medium-chain substrates. Plays a role in adipocyte differentiation. In Macaca fascicularis (Crab-eating macaque), this protein is Medium-chain acyl-CoA ligase ACSF2, mitochondrial.